Reading from the N-terminus, the 534-residue chain is NAD(P)H-quinone oxidoreductase chain 4 (534 aa).

14 helical membrane passes run 12-32 (FPWLSASILFPIGSAFVIPFF), 44-64 (FALSIALITFLITVGSYINGF), 96-116 (MPLILLTSFITALAVLAAWPV), 120-140 (PKLFFFLILVMDGGQIAVFAV), 144-164 (LLFFLTWELELIPVYLLLAIW), 176-196 (FIIYTAGSSIFILLAALAMGF), 220-240 (ILCYVGLLIAFGVKLPIVPLH), 251-271 (TAPVHMLLAGILLKMGGYALL), 285-305 (FAPLLIVLGVVNIIYAALTSF), 314-334 (IAYSSISHMGFVLIGIGSFSS), 340-360 (AMLQMVSHGLIGASLFFLVGA), 384-404 (FALWTACSLASLALPGMSGFV), 425-445 (VVMASLAAIGVILTPIYLLSM), and 472-492 (VYIIACLLLPIIGIGLYPRLV).

It belongs to the complex I subunit 4 family.

Its subcellular location is the cellular thylakoid membrane. It catalyses the reaction a plastoquinone + NADH + (n+1) H(+)(in) = a plastoquinol + NAD(+) + n H(+)(out). The enzyme catalyses a plastoquinone + NADPH + (n+1) H(+)(in) = a plastoquinol + NADP(+) + n H(+)(out). In terms of biological role, NDH-1 shuttles electrons from NAD(P)H, via FMN and iron-sulfur (Fe-S) centers, to quinones in the respiratory chain. The immediate electron acceptor for the enzyme in this species is believed to be plastoquinone. Couples the redox reaction to proton translocation (for every two electrons transferred, four hydrogen ions are translocated across the cytoplasmic membrane), and thus conserves the redox energy in a proton gradient. The sequence is that of NAD(P)H-quinone oxidoreductase chain 4 from Prochlorococcus marinus (strain AS9601).